The chain runs to 132 residues: Small ribosomal subunit protein uS8 (132 aa).

Belongs to the universal ribosomal protein uS8 family. As to quaternary structure, part of the 30S ribosomal subunit. Contacts proteins S5 and S12.

Functionally, one of the primary rRNA binding proteins, it binds directly to 16S rRNA central domain where it helps coordinate assembly of the platform of the 30S subunit. The polypeptide is Small ribosomal subunit protein uS8 (Pediococcus pentosaceus (strain ATCC 25745 / CCUG 21536 / LMG 10740 / 183-1w)).